A 330-amino-acid chain; its full sequence is Phenylalanine--tRNA ligase alpha subunit (330 aa).

Glu246 contributes to the Mg(2+) binding site.

This sequence belongs to the class-II aminoacyl-tRNA synthetase family. Phe-tRNA synthetase alpha subunit type 1 subfamily. As to quaternary structure, tetramer of two alpha and two beta subunits. It depends on Mg(2+) as a cofactor.

It is found in the cytoplasm. It carries out the reaction tRNA(Phe) + L-phenylalanine + ATP = L-phenylalanyl-tRNA(Phe) + AMP + diphosphate + H(+). The polypeptide is Phenylalanine--tRNA ligase alpha subunit (Sulfurovum sp. (strain NBC37-1)).